Here is a 297-residue protein sequence, read N- to C-terminus: Octopine catabolism/uptake operon regulatory protein OccR (297 aa).

The HTH lysR-type domain occupies 1–58 (MNLRQVEAFRAVMLTGQMTAAAELMLVTQPAISRLIKDFERATKLQLFERRGNHIIPT). The H-T-H motif DNA-binding region spans 18 to 37 (MTAAAELMLVTQPAISRLIK).

The protein belongs to the LysR transcriptional regulatory family.

In terms of biological role, positive regulatory protein for the occ operon involved in octopine catabolism and uptake. Also acts as a negative regulator of its expression. This is Octopine catabolism/uptake operon regulatory protein OccR (occR) from Rhizobium meliloti (Ensifer meliloti).